Reading from the N-terminus, the 79-residue chain is UPF0349 protein BCE33L4669 (79 aa).

This sequence belongs to the UPF0349 family.

The protein is UPF0349 protein BCE33L4669 of Bacillus cereus (strain ZK / E33L).